A 788-amino-acid polypeptide reads, in one-letter code: Integrin beta-6 (788 aa).

The signal sequence occupies residues 1–21 (MGIELLCLFFLFLGRNDHVQG). The PSI domain maps to 22 to 71 (GCALGGAETCEDCLLIGPQCAWCAQENFTHPSGVGERCDTPANLLAKGCQ). Residues 22–709 (GCALGGAETC…KDCPKPPNIP (688 aa)) are Extracellular-facing. Intrachain disulfides connect Cys23–Cys41, Cys31–Cys454, Cys34–Cys59, Cys44–Cys70, Cys197–Cys204, Cys252–Cys293, Cys394–Cys406, Cys426–Cys452, Cys456–Cys476, Cys467–Cys479, Cys481–Cys490, Cys492–Cys519, Cys502–Cys517, Cys511–Cys522, Cys524–Cys537, Cys539–Cys560, Cys544–Cys558, Cys552–Cys563, and Cys565–Cys574. 2 N-linked (GlcNAc...) asparagine glycosylation sites follow: Asn48 and Asn97. Residues 131-371 (YPVDLYYLMD…QLIISAYEEL (241 aa)) form the VWFA domain. Positions 140, 142, and 144 each coordinate Mg(2+). Ca(2+) contacts are provided by Ser144, Asp147, Asp148, and Glu179. Ca(2+) is bound by residues Asn235, Asp237, Pro239, and Glu240. Glu240 is a Mg(2+) binding site. N-linked (GlcNAc...) asparagine glycosylation occurs at Asn260. Ca(2+) contacts are provided by Asp271 and Lys355. Asn387 and Asn396 each carry an N-linked (GlcNAc...) asparagine glycan. I-EGF domains lie at 456–491 (CQKEVEVNSSKCHHGNGSFQCGVCACHPGHMGPRCE), 492–538 (CGED…PYCQ), 539–575 (CDNFSCVRHKGLLCGGNGDCDCGECVCRSGWTGEYCN), and 576–615 (CTTSTDSCVSEDGVLCSGRGDCVCGKCVCTNPGASGPTCE). N-linked (GlcNAc...) asparagine glycans are attached at residues Asn463 and Asn471. A glycan (N-linked (GlcNAc...) asparagine) is linked at Asn541. Asn575 is a glycosylation site (N-linked (GlcNAc...) asparagine). 9 disulfide bridges follow: Cys576–Cys599, Cys583–Cys597, Cys591–Cys602, Cys604–Cys614, Cys617–Cys620, Cys624–Cys670, Cys630–Cys649, Cys633–Cys645, and Cys678–Cys702. Residues 710-730 (MIMLGVSLAILLIGVVLLCIW) traverse the membrane as a helical segment. The interval 731–758 (KLLVSFHDRKEVAKFEAERSKAKWQTGT) is interaction with HAX1. Residues 731–788 (KLLVSFHDRKEVAKFEAERSKAKWQTGTNPLYRGSTSTFKNVTYKHREKQKVDLSTDC) are Cytoplasmic-facing.

The protein belongs to the integrin beta chain family. In terms of assembly, heterodimer of an alpha and a beta subunit. Interacts with FLNB. Interacts with HAX1. ITGAV:ITGB6 interacts with FBN1. ITGAV:ITGB6 interacts with TGFB1. As to quaternary structure, (Microbial infection) Integrin ITGAV:ITGB6 interacts with coxsackievirus A9, coxsackievirus B1 capsid proteins. (Microbial infection) Integrin ITGAV:ITGB6 interacts with herpes simplex virus-1/HHV-1 gH:gL proteins.

The protein localises to the cell membrane. It localises to the cell junction. Its subcellular location is the focal adhesion. Its function is as follows. Integrin alpha-V:beta-6 (ITGAV:ITGB6) is a receptor for fibronectin and cytotactin. It recognizes the sequence R-G-D in its ligands. Internalization of integrin alpha-V/beta-6 via clathrin-mediated endocytosis promotes carcinoma cell invasion. ITGAV:ITGB6 acts as a receptor for fibrillin-1 (FBN1) and mediates R-G-D-dependent cell adhesion to FBN1. Integrin alpha-V:beta-6 (ITGAV:ITGB6) mediates R-G-D-dependent release of transforming growth factor beta-1 (TGF-beta-1) from regulatory Latency-associated peptide (LAP), thereby playing a key role in TGF-beta-1 activation. In terms of biological role, (Microbial infection) Integrin ITGAV:ITGB6 acts as a receptor for Coxsackievirus A9 and Coxsackievirus B1. Functionally, (Microbial infection) Integrin ITGAV:ITGB6 acts as a receptor for Herpes simplex virus-1/HHV-1. The chain is Integrin beta-6 (ITGB6) from Homo sapiens (Human).